A 391-amino-acid chain; its full sequence is Ribonuclease 3-like protein 2 (391 aa).

The short motif at 7 to 26 is the Nuclear export signal element; the sequence is PEYNFPAITRCSLSNSLPHR. Positions 60-203 constitute an RNase III domain; that stretch reads MEAVEKILNY…LAGAVYVDVN (144 aa). 3 residues coordinate Mg(2+): Glu96, Asp189, and Glu192. DRBM domains are found at residues 218–294 and 313–387; these read EPIV…KLSE and HAKT…ALRK. Cysteines 240 and 322 form a disulfide. The Bipartite nuclear localization signature appears at 371–387; sequence KKAESSSAYHMIRALRK.

As to quaternary structure, homodimer; disulfide-linked. Mg(2+) is required as a cofactor. Requires Mn(2+) as cofactor. Expressed in seeds, leaves and flower buds.

The protein resides in the nucleus. It localises to the cytoplasm. Functionally, ribonuclease that cleaves double-stranded RNA (dsRNA). Required for 3'-external transcribed spacer (ETS) cleavage of the pre-rRNA precursors. May promote the production of 21 nucleotide small interfering RNA (siRNA) during post-transcriptional gene silencing (PTGS). The sequence is that of Ribonuclease 3-like protein 2 (RTL2) from Arabidopsis thaliana (Mouse-ear cress).